Here is a 702-residue protein sequence, read N- to C-terminus: Cell adhesion molecule CEACAM5 (702 aa).

Residues methionine 1–alanine 34 form the signal peptide. The Ig-like V-type domain occupies lysine 35–leucine 144. N-linked (GlcNAc...) asparagine glycosylation is found at asparagine 104, asparagine 115, asparagine 152, asparagine 182, asparagine 197, asparagine 204, asparagine 208, asparagine 246, asparagine 256, asparagine 274, asparagine 288, asparagine 292, asparagine 309, asparagine 330, asparagine 351, asparagine 360, asparagine 375, asparagine 432, asparagine 466, asparagine 480, asparagine 508, asparagine 529, asparagine 553, asparagine 560, asparagine 580, asparagine 612, asparagine 650, and asparagine 665. Ig-like C2-type domains are found at residues proline 145–asparagine 232, proline 240–threonine 315, proline 323–asparagine 410, proline 418–threonine 495, proline 501–aspartate 588, and proline 593–serine 675. Cysteine 167 and cysteine 215 are disulfide-bonded. Cysteine 259 and cysteine 299 are oxidised to a cystine. Cysteine 345 and cysteine 393 are oxidised to a cystine. Cysteine 437 and cysteine 477 are disulfide-bonded. Cysteines 523 and 571 form a disulfide. Cysteine 615 and cysteine 655 are joined by a disulfide. Residue alanine 685 is the site of GPI-anchor amidated alanine attachment. Positions glycine 686–isoleucine 702 are cleaved as a propeptide — removed in mature form.

Belongs to the immunoglobulin superfamily. CEA family. Homodimer. In terms of processing, complex immunoreactive glycoprotein with a MW of 180 kDa comprising 60% carbohydrate. In terms of tissue distribution, expressed in columnar epithelial and goblet cells of the colon (at protein level). Found in adenocarcinomas of endodermally derived digestive system epithelium and fetal colon.

It localises to the cell membrane. The protein resides in the apical cell membrane. It is found in the cell surface. In terms of biological role, cell surface glycoprotein that plays a role in cell adhesion, intracellular signaling and tumor progression. Mediates homophilic and heterophilic cell adhesion with other carcinoembryonic antigen-related cell adhesion molecules, such as CEACAM6. Plays a role as an oncogene by promoting tumor progression; induces resistance to anoikis of colorectal carcinoma cells. Its function is as follows. (Microbial infection) Receptor for E.coli Dr adhesins. Binding of E.coli Dr adhesins leads to dissociation of the homodimer. This is Cell adhesion molecule CEACAM5 from Homo sapiens (Human).